Consider the following 418-residue polypeptide: ML-236A carboxylate methylbutanoyltransferase mlcH (418 aa).

R78 contacts monacolin J. S81 acts as the Acyl-ester intermediate in catalysis. Positions 178, 193, and 262 each coordinate monacolin J. G370 lines the 2-methylbutanoate pocket.

The protein belongs to the class-A beta-lactamase family.

The enzyme catalyses ML-236A carboxylate + (S)-2-methylbutanoyl-[2-methylbutanoate polyketide synthase] = mevinic carboxylate + holo-[2-methylbutanoate polyketide synthase]. Its pathway is polyketide biosynthesis. In terms of biological role, compactin diketide synthase; part of the gene cluster that mediates the biosynthesis of compactin, also known as mevastatin or ML-236B, and which acts as a potent competitive inhibitor of HMG-CoA reductase. Compactin biosynthesis is performed in two stages. The first stage is catalyzed by the nonaketide synthase mlcA, which belongs to type I polyketide synthases and catalyzes the iterative nine-step formation of the polyketide. This PKS stage is completed by the action of dehydrogenase mlcG, which catalyzes the NADPH-dependent reduction of the unsaturated tetra-, penta- and heptaketide intermediates that arise during the mlcA-mediated biosynthesis of the nonaketide chain and leads to dihydro-ML-236C carboxylate. Covalently bound dihydro-ML-236C carboxylate is released from mlcA by the mlcF esterase. Conversion of dihydro-ML-236C carboxylate into ML-236A carboxylate is subsequently performed with the participation of molecular oxygen and P450 monoogygenase mlcC. Finally, mlcH performs the conversion of ML-236A carboxylate to ML-236B/compactin carboxylate through the addition of the side-chain diketide moiety produced by the diketide synthase mlcB. In Penicillium citrinum, this protein is ML-236A carboxylate methylbutanoyltransferase mlcH.